We begin with the raw amino-acid sequence, 237 residues long: Ribonuclease PH (237 aa).

Residues R86 and 124–126 contribute to the phosphate site; that span reads GTR.

Belongs to the RNase PH family. In terms of assembly, homohexameric ring arranged as a trimer of dimers.

The catalysed reaction is tRNA(n+1) + phosphate = tRNA(n) + a ribonucleoside 5'-diphosphate. Functionally, phosphorolytic 3'-5' exoribonuclease that plays an important role in tRNA 3'-end maturation. Removes nucleotide residues following the 3'-CCA terminus of tRNAs; can also add nucleotides to the ends of RNA molecules by using nucleoside diphosphates as substrates, but this may not be physiologically important. Probably plays a role in initiation of 16S rRNA degradation (leading to ribosome degradation) during starvation. The chain is Ribonuclease PH from Rhodopseudomonas palustris (strain HaA2).